A 233-amino-acid polypeptide reads, in one-letter code: Rab-like protein 3 (233 aa).

The small GTPase-like stretch occupies residues 1–233; the sequence is MASLDRVKVL…RFNFKSLHSD (233 aa). GTP contacts are provided by residues 16 to 21, 148 to 150, and 179 to 180; these read GVGKSS, KFD, and DC.

Belongs to the small GTPase superfamily. Rab family. Homodimer.

In terms of biological role, required for KRAS signaling regulation and modulation of cell proliferation. Regulator of KRAS prenylation, and probably prenylation of other small GTPases. Required for lymphocyte development and function. Not required for myeloid cell development. This Danio rerio (Zebrafish) protein is Rab-like protein 3 (rabl3).